A 90-amino-acid chain; its full sequence is MSAVETSKKSEVVAQFARAANDTGSPEVQVALLTTRINELTVHFKAHTKDHHSRRGLLRMVSRRRKLLDYLKGKDADRYRALIEKLGLRK.

The protein belongs to the universal ribosomal protein uS15 family. Part of the 30S ribosomal subunit. Forms a bridge to the 50S subunit in the 70S ribosome, contacting the 23S rRNA.

Functionally, one of the primary rRNA binding proteins, it binds directly to 16S rRNA where it helps nucleate assembly of the platform of the 30S subunit by binding and bridging several RNA helices of the 16S rRNA. In terms of biological role, forms an intersubunit bridge (bridge B4) with the 23S rRNA of the 50S subunit in the ribosome. This chain is Small ribosomal subunit protein uS15, found in Paraburkholderia xenovorans (strain LB400).